The chain runs to 124 residues: UPF0482 protein YpsIP31758_1865 (124 aa).

A signal peptide spans 1-32 (MMKINNLPRLIRTFLPATLLMLPLVWQTPALA). The tract at residues 47–68 (GGNNDPMSKEQARQSQQQWDET) is disordered.

Belongs to the UPF0482 family.

This is UPF0482 protein YpsIP31758_1865 from Yersinia pseudotuberculosis serotype O:1b (strain IP 31758).